The primary structure comprises 135 residues: MAEKFDNLEEHLEKFVENIRQLGIIVSDFQPSSQAGLNQKLNFLVTGLQDIDKCRQQLHDITVPLEVFDYIDQGRNPQLYTKECLERALAKNEQVKGKIDTLKKFKSLLIQELSKVFPEDMAKYKAIRGEDHPPS.

Belongs to the Mediator complex subunit 10 family. As to quaternary structure, component of the Mediator complex.

Its subcellular location is the nucleus. In terms of biological role, component of the Mediator complex, a coactivator involved in the regulated transcription of nearly all RNA polymerase II-dependent genes. Mediator functions as a bridge to convey information from gene-specific regulatory proteins to the basal RNA polymerase II transcription machinery. Mediator is recruited to promoters by direct interactions with regulatory proteins and serves as a scaffold for the assembly of a functional preinitiation complex with RNA polymerase II and the general transcription factors. This chain is Mediator of RNA polymerase II transcription subunit 10 (med10), found in Xenopus tropicalis (Western clawed frog).